The primary structure comprises 104 residues: T-complex protein 1 subunit zeta (104 aa).

G24 provides a ligand contact to ADP. G24 contributes to the ATP binding site. D75 provides a ligand contact to Mg(2+). ADP-binding residues include G76, T78, and S79. The ATP site is built by G76 and T78.

It belongs to the TCP-1 chaperonin family. Component of the chaperonin-containing T-complex (TRiC), a hexadecamer composed of two identical back-to-back stacked rings enclosing a protein folding chamber. Each ring is made up of eight different subunits: TCP1/CCT1, CCT2, CCT3, CCT4, CCT5, CCT6A/CCT6, CCT7, CCT8. Interacts with PACRG.

It is found in the cytoplasm. It catalyses the reaction ATP + H2O = ADP + phosphate + H(+). Component of the chaperonin-containing T-complex (TRiC), a molecular chaperone complex that assists the folding of actin, tubulin and other proteins upon ATP hydrolysis. The TRiC complex mediates the folding of WRAP53/TCAB1, thereby regulating telomere maintenance. The protein is T-complex protein 1 subunit zeta (CCT6) of Sus scrofa (Pig).